A 360-amino-acid chain; its full sequence is Cysteine proteinase 2 (360 aa).

The first 19 residues, 1–19 (MVPRRLFVLAVVVLADTAA), serve as a signal peptide directing secretion. The propeptide at 20–142 (VVNSGFADSN…NHRMRAAAVA (123 aa)) is activation peptide. A glycan (N-linked (GlcNAc...) asparagine) is linked at Asn125. 2 cysteine pairs are disulfide-bonded: Cys164–Cys207 and Cys198–Cys240. Cys167 is an active-site residue. Asn256 carries an N-linked (GlcNAc...) asparagine glycan. Cys298 and Cys348 are oxidised to a cystine. Catalysis depends on residues His307 and Asn327.

Belongs to the peptidase C1 family. Expressed at the onset of germination.

The protein resides in the vacuole. Involved in the degradation of the storage protein zein. May play a role in proteolysis during emergencies. This Zea mays (Maize) protein is Cysteine proteinase 2 (CCP2).